Here is a 187-residue protein sequence, read N- to C-terminus: MGLSLHPQIDNGLTKGQPGFPGGKLYCHCPSNKIEVTLGSDVLHNHACGCSKCWKPAGSLFSVVGVIPTDKVSVTANSDKLTIVDSEAVIQRNACSQCGVHMFGRIHKEHPFKGLDFVHAELSDTKGWQEPQFAAFVSSIIEQGFKPEGMDEVRAKFESVGLKTYDALSPALMDAIATWTAKRAGKL.

In terms of domain architecture, CENP-V/GFA spans 20–166; it reads FPGGKLYCHC…FESVGLKTYD (147 aa). Positions 27, 29, 48, 50, 53, 95, and 98 each coordinate Zn(2+).

The protein belongs to the Gfa family. The cofactor is Zn(2+).

It catalyses the reaction S-(hydroxymethyl)glutathione = glutathione + formaldehyde. It functions in the pathway one-carbon metabolism; formaldehyde degradation; formate from formaldehyde (glutathione route): step 1/3. In terms of biological role, catalyzes the condensation of formaldehyde and glutathione to S-hydroxymethylglutathione. The sequence is that of Putative glutathione-dependent formaldehyde-activating enzyme from Talaromyces marneffei (strain ATCC 18224 / CBS 334.59 / QM 7333) (Penicillium marneffei).